Here is a 106-residue protein sequence, read N- to C-terminus: MVNIPKTRRTYCKGKTCKKHTPHKVTQYKKGKDSIFAQGKRRYDRKQSGYGGQTKPVFHKKAKTTKKVVLRLECTVCKYKMQVSLKRCKHFELGGEKKTKGAALTF.

Residues 36-56 form a disordered region; it reads FAQGKRRYDRKQSGYGGQTKP.

This sequence belongs to the eukaryotic ribosomal protein eL42 family.

The chain is Large ribosomal subunit protein eL42 (RPL44) from Coprinopsis cinerea (strain Okayama-7 / 130 / ATCC MYA-4618 / FGSC 9003) (Inky cap fungus).